A 431-amino-acid chain; its full sequence is MYRFAPSPTGDMHIGNLRAAIFNYICSLQDKSGFILRIEDTDKERNIEGKEKDILEILSKFGIKPEQIYIQSENLKFHRQLASKLLIDKKAFACFCTEEELEAKKQKAKEQGVAYRYDGTCERLSDAEVLNCEKPFVIRMKKPTRTMSFTDAIKGELSFEPDAVDSFVIMRADKTPTYNFACAVDDMLEGVTFVIRGEDHVSNTPKQDLIREGLGYTGKMNYAHLPILLNIEGKKMSKRENESSVKWLFEQGFLPEAIANYLILLGNKTPTEIFTIEDAVKWFDITKISRSPARFDVKKLEQINREHIKLASKERIKEIFGVDESKVELVKFYTQESSLVPEIKAKVEAIYSPKIAPDEYKNEFEIIKKAARNLKPCESFDEFKKELMGATNLKGKNFFMPLRALLTNDLHGPELSELYPLIKDDLAKILI.

A 'HIGH' region motif is present at residues 6 to 16 (PSPTGDMHIGN). Positions 235-239 (KMSKR) match the 'KMSKS' region motif. Lys-238 contributes to the ATP binding site.

Belongs to the class-I aminoacyl-tRNA synthetase family. Glutamate--tRNA ligase type 1 subfamily. As to quaternary structure, monomer.

It localises to the cytoplasm. The enzyme catalyses tRNA(Glu) + L-glutamate + ATP = L-glutamyl-tRNA(Glu) + AMP + diphosphate. Its function is as follows. Catalyzes the attachment of glutamate to tRNA(Glu) in a two-step reaction: glutamate is first activated by ATP to form Glu-AMP and then transferred to the acceptor end of tRNA(Glu). This is Glutamate--tRNA ligase 1 from Campylobacter concisus (strain 13826).